We begin with the raw amino-acid sequence, 385 residues long: Lipid-A-disaccharide synthase (385 aa).

The protein belongs to the LpxB family.

It carries out the reaction a lipid X + a UDP-2-N,3-O-bis[(3R)-3-hydroxyacyl]-alpha-D-glucosamine = a lipid A disaccharide + UDP + H(+). Its pathway is bacterial outer membrane biogenesis; LPS lipid A biosynthesis. Condensation of UDP-2,3-diacylglucosamine and 2,3-diacylglucosamine-1-phosphate to form lipid A disaccharide, a precursor of lipid A, a phosphorylated glycolipid that anchors the lipopolysaccharide to the outer membrane of the cell. This is Lipid-A-disaccharide synthase from Pseudoalteromonas translucida (strain TAC 125).